Reading from the N-terminus, the 325-residue chain is Olfactory receptor 1S2 (325 aa).

The Extracellular segment spans residues 1–38 (MKTLCSFLQISRNMHQENQTTITEFILLGLSNQAEHQN). An N-linked (GlcNAc...) asparagine glycan is attached at asparagine 18. The helical transmembrane segment at 39 to 62 (LLFVLFLSMYVVTVVGNGLIIVAI) threads the bilayer. The Cytoplasmic portion of the chain corresponds to 63–70 (SLDIYLHT). Residues 71-92 (PMYLFLAYLSFADISSISNSVP) traverse the membrane as a helical segment. Over 93 to 113 (KMLVNIQTNSQSISYESCITQ) the chain is Extracellular. A disulfide bridge links cysteine 110 with cysteine 202. A helical transmembrane segment spans residues 114–133 (MYFSIVFVVTDNLLLGTMAF). Topologically, residues 134–152 (DHFVAICHPLNYTTFMRAR) are cytoplasmic. The chain crosses the membrane as a helical span at residues 153–171 (FGTLLTVISWFLSNIIALT). Topologically, residues 172–208 (HTLLLIQLLFCDHNTLPHFFCDLAPLLKLSCSDTMIN) are extracellular. A helical membrane pass occupies residues 209–232 (ELVLFIVGLSVIIFPFVLIFFSYV). The Cytoplasmic segment spans residues 233 to 249 (CIIRAVLGVSSTQGKWK). Residues 250-272 (AFSTCGSHLTIALLFYGTTVGVY) traverse the membrane as a helical segment. The Extracellular portion of the chain corresponds to 273 to 285 (FFPSSTHPEDTDK). A helical membrane pass occupies residues 286-305 (IGAVLFTVVTPMMNPFIYSL). The Cytoplasmic segment spans residues 306-325 (RNKDMKGALRKLINRKISSL).

The protein belongs to the G-protein coupled receptor 1 family.

The protein resides in the cell membrane. Odorant receptor. The polypeptide is Olfactory receptor 1S2 (OR1S2) (Homo sapiens (Human)).